A 430-amino-acid chain; its full sequence is Phosphomethylpyrimidine synthase (430 aa).

Residues N68, M96, Y125, H164, 186 to 188 (SRG), 227 to 230 (DALR), and E266 contribute to the substrate site. H270 is a Zn(2+) binding site. Y293 provides a ligand contact to substrate. Residue H334 coordinates Zn(2+). C410, C413, and C417 together coordinate [4Fe-4S] cluster.

It belongs to the ThiC family. The cofactor is [4Fe-4S] cluster.

The catalysed reaction is 5-amino-1-(5-phospho-beta-D-ribosyl)imidazole + S-adenosyl-L-methionine = 4-amino-2-methyl-5-(phosphooxymethyl)pyrimidine + CO + 5'-deoxyadenosine + formate + L-methionine + 3 H(+). The protein operates within cofactor biosynthesis; thiamine diphosphate biosynthesis. Catalyzes the synthesis of the hydroxymethylpyrimidine phosphate (HMP-P) moiety of thiamine from aminoimidazole ribotide (AIR) in a radical S-adenosyl-L-methionine (SAM)-dependent reaction. This Pyrobaculum aerophilum (strain ATCC 51768 / DSM 7523 / JCM 9630 / CIP 104966 / NBRC 100827 / IM2) protein is Phosphomethylpyrimidine synthase.